The following is a 425-amino-acid chain: Glutamyl-tRNA reductase (425 aa).

Residues 47–50 (TCNR), Ser107, 112–114 (EDQ), and Gln118 contribute to the substrate site. The active-site Nucleophile is the Cys48. 187–192 (GAGHMA) provides a ligand contact to NADP(+).

Belongs to the glutamyl-tRNA reductase family. Homodimer.

The catalysed reaction is (S)-4-amino-5-oxopentanoate + tRNA(Glu) + NADP(+) = L-glutamyl-tRNA(Glu) + NADPH + H(+). Its pathway is porphyrin-containing compound metabolism; protoporphyrin-IX biosynthesis; 5-aminolevulinate from L-glutamyl-tRNA(Glu): step 1/2. It functions in the pathway porphyrin-containing compound metabolism; chlorophyll biosynthesis. Functionally, catalyzes the NADPH-dependent reduction of glutamyl-tRNA(Glu) to glutamate 1-semialdehyde (GSA). In Roseiflexus castenholzii (strain DSM 13941 / HLO8), this protein is Glutamyl-tRNA reductase.